The sequence spans 286 residues: Phycobilisome 31.8 kDa linker polypeptide, phycoerythrin-associated, rod (286 aa).

The PBS-linker domain maps to 2-179 (PFGPASRLGV…LVRGASSSSL (178 aa)). Positions 231–286 (GKVYRIEVTGYRAKTFNNISKFRRSNQVFLVPYEKLSQEYQRIHQQGGVIASITPV) constitute a CpcD-like domain.

Belongs to the phycobilisome linker protein family. As to quaternary structure, the phycobilisome is a hemidiscoidal structure that is composed of two distinct substructures: a core complex and six rods radiating from the core.

It localises to the cellular thylakoid membrane. Rod linker protein, associated with phycoerythrocyanin. Linker polypeptides determine the state of aggregation and the location of the disk-shaped phycobiliprotein units within the phycobilisome and modulate their spectroscopic properties in order to mediate a directed and optimal energy transfer. The protein is Phycobilisome 31.8 kDa linker polypeptide, phycoerythrin-associated, rod (cpeC) of Microchaete diplosiphon (Fremyella diplosiphon).